We begin with the raw amino-acid sequence, 443 residues long: Tol-Pal system protein TolB (443 aa).

Positions 1-33 (MKIGIINTKIRTVFSAFACMIAASLVCTMPARA) are cleaved as a signal peptide.

Belongs to the TolB family. In terms of assembly, the Tol-Pal system is composed of five core proteins: the inner membrane proteins TolA, TolQ and TolR, the periplasmic protein TolB and the outer membrane protein Pal. They form a network linking the inner and outer membranes and the peptidoglycan layer.

It is found in the periplasm. In terms of biological role, part of the Tol-Pal system, which plays a role in outer membrane invagination during cell division and is important for maintaining outer membrane integrity. In Brucella melitensis biotype 1 (strain ATCC 23456 / CCUG 17765 / NCTC 10094 / 16M), this protein is Tol-Pal system protein TolB.